A 256-amino-acid chain; its full sequence is Enolase-phosphatase E1 (256 aa).

Aspartate 14 and glutamate 16 together coordinate Mg(2+). Residues 142-143 and lysine 176 each bind substrate; that span reads SS. Position 201 (aspartate 201) interacts with Mg(2+).

The protein belongs to the HAD-like hydrolase superfamily. MasA/MtnC family. In terms of assembly, monomer. It depends on Mg(2+) as a cofactor.

The protein resides in the cytoplasm. It is found in the nucleus. It catalyses the reaction 5-methylsulfanyl-2,3-dioxopentyl phosphate + H2O = 1,2-dihydroxy-5-(methylsulfanyl)pent-1-en-3-one + phosphate. The protein operates within amino-acid biosynthesis; L-methionine biosynthesis via salvage pathway; L-methionine from S-methyl-5-thio-alpha-D-ribose 1-phosphate: step 3/6. It participates in amino-acid biosynthesis; L-methionine biosynthesis via salvage pathway; L-methionine from S-methyl-5-thio-alpha-D-ribose 1-phosphate: step 4/6. In terms of biological role, bifunctional enzyme that catalyzes the enolization of 2,3-diketo-5-methylthiopentyl-1-phosphate (DK-MTP-1-P) into the intermediate 2-hydroxy-3-keto-5-methylthiopentenyl-1-phosphate (HK-MTPenyl-1-P), which is then dephosphorylated to form the acireductone 1,2-dihydroxy-3-keto-5-methylthiopentene (DHK-MTPene). The chain is Enolase-phosphatase E1 from Drosophila erecta (Fruit fly).